The sequence spans 238 residues: Purine nucleoside phosphorylase DeoD-type (238 aa).

Histidine 5 serves as a coordination point for a purine D-ribonucleoside. Residues glycine 21, arginine 25, arginine 44, and 88-91 (RVGS) contribute to the phosphate site. A purine D-ribonucleoside contacts are provided by residues 180 to 182 (EME) and 204 to 205 (SD). The active-site Proton donor is the aspartate 205.

Belongs to the PNP/UDP phosphorylase family. As to quaternary structure, homohexamer; trimer of homodimers.

The catalysed reaction is a purine D-ribonucleoside + phosphate = a purine nucleobase + alpha-D-ribose 1-phosphate. The enzyme catalyses a purine 2'-deoxy-D-ribonucleoside + phosphate = a purine nucleobase + 2-deoxy-alpha-D-ribose 1-phosphate. Catalyzes the reversible phosphorolytic breakdown of the N-glycosidic bond in the beta-(deoxy)ribonucleoside molecules, with the formation of the corresponding free purine bases and pentose-1-phosphate. In Photorhabdus laumondii subsp. laumondii (strain DSM 15139 / CIP 105565 / TT01) (Photorhabdus luminescens subsp. laumondii), this protein is Purine nucleoside phosphorylase DeoD-type.